Here is a 947-residue protein sequence, read N- to C-terminus: Vacuolar membrane protease (947 aa).

Residues 1 to 15 (MRFKALLRAIFRFRK) lie on the Cytoplasmic side of the membrane. A helical membrane pass occupies residues 16 to 36 (TNFSILLIITYAIIIALLVFD). Residues 37–358 (RSRYKLDLPN…GLFFVVVDTK (322 aa)) lie on the Vacuolar side of the membrane. N-linked (GlcNAc...) asparagine glycosylation is found at Asn-46, Asn-92, Asn-108, and Asn-121. Residues His-156 and Asp-168 each contribute to the Zn(2+) site. Glu-200 functions as the Proton acceptor in the catalytic mechanism. Residues Glu-201, Glu-226, and His-300 each coordinate Zn(2+). An N-linked (GlcNAc...) asparagine glycan is attached at Asn-319. Residues 359-379 (HLFYADIFMLIVGPILLMMKA) form a helical membrane-spanning segment. The Cytoplasmic segment spans residues 380–391 (HLDKRRRLERSR). The helical transmembrane segment at 392–412 (LVQLRLLLSLGLSVVFLLLLT) threads the bilayer. The Vacuolar segment spans residues 413 to 428 (KSLNSFNPFVYSADYR). Residues 429–449 (TPLTGLFLLFVTVNYLIVTLA) traverse the membrane as a helical segment. Residues 450 to 458 (ERLNPTESY) are Cytoplasmic-facing. The helical transmembrane segment at 459–479 (KTVAINQIFIIAWLMQLYITL) threads the bilayer. At 480-489 (RMAKSDFTLT) the chain is on the vacuolar side. Residues 490–510 (GTYPLSIFSGCLIVALSLGLF) form a helical membrane-spanning segment. The Cytoplasmic segment spans residues 511–601 (GTKNKAVNDA…DKNSDFSKHY (91 aa)). Composition is skewed to polar residues over residues 522 to 531 (NSSVRYASSQ) and 546 to 567 (NINQ…TDLH). A disordered region spans residues 522–573 (NSSVRYASSQNDEDNPLPSQDRGENINQVRDTGNQEVTSNTNTDLHSNAEEV). Residues 602–622 (NWIVQFLCIVPISSFIFLFSL) traverse the membrane as a helical segment. Residues 623–641 (DYTLDAIHKMVQETTDDVQ) lie on the Vacuolar side of the membrane. The chain crosses the membrane as a helical span at residues 642 to 662 (LICIIITIGVILLALPILPFI). The Cytoplasmic segment spans residues 663 to 669 (SKLNYQS). Residues 670–690 (SVIIAIIGVLLFGKSLVMQPF) form a helical membrane-spanning segment. Over 691–947 (SEIAPLKVRF…LVVIKDKIQL (257 aa)) the chain is Vacuolar. 4 N-linked (GlcNAc...) asparagine glycosylation sites follow: Asn-742, Asn-784, Asn-801, and Asn-833.

The protein belongs to the peptidase M28 family. Zn(2+) serves as cofactor.

It localises to the vacuole membrane. In terms of biological role, may be involved in vacuolar sorting and osmoregulation. This is Vacuolar membrane protease from Candida glabrata (strain ATCC 2001 / BCRC 20586 / JCM 3761 / NBRC 0622 / NRRL Y-65 / CBS 138) (Yeast).